The sequence spans 929 residues: Isoleucine--tRNA ligase (929 aa).

The 'HIGH' region signature appears at 57–67 (PYANGNIHVGH). E554 is an L-isoleucyl-5'-AMP binding site. The 'KMSKS' region motif lies at 595-599 (KMSKS). K598 provides a ligand contact to ATP. 4 residues coordinate Zn(2+): C888, C891, C908, and C911.

This sequence belongs to the class-I aminoacyl-tRNA synthetase family. IleS type 1 subfamily. Monomer. The cofactor is Zn(2+).

It localises to the cytoplasm. It catalyses the reaction tRNA(Ile) + L-isoleucine + ATP = L-isoleucyl-tRNA(Ile) + AMP + diphosphate. Catalyzes the attachment of isoleucine to tRNA(Ile). As IleRS can inadvertently accommodate and process structurally similar amino acids such as valine, to avoid such errors it has two additional distinct tRNA(Ile)-dependent editing activities. One activity is designated as 'pretransfer' editing and involves the hydrolysis of activated Val-AMP. The other activity is designated 'posttransfer' editing and involves deacylation of mischarged Val-tRNA(Ile). The sequence is that of Isoleucine--tRNA ligase from Streptococcus thermophilus (strain CNRZ 1066).